We begin with the raw amino-acid sequence, 175 residues long: MSLREIIILPDKQLRLVSKPVEKVTPEIRQLVDDMFQTMYDAPGIGLAAIQVAQPLRVITMDLAKPDAGGETKREPRVFINPEIIAKSDELSIYEEGCLSIPEYYEEVERPARVRVRFTDLDGVLREEDAEGLYATCIQHEIDHLNGVLFIDYLSKLKRDRVLKKFTKAAKRAGE.

Positions 98 and 140 each coordinate Fe cation. Residue Glu141 is part of the active site. Position 144 (His144) interacts with Fe cation.

The protein belongs to the polypeptide deformylase family. Fe(2+) is required as a cofactor.

It carries out the reaction N-terminal N-formyl-L-methionyl-[peptide] + H2O = N-terminal L-methionyl-[peptide] + formate. Functionally, removes the formyl group from the N-terminal Met of newly synthesized proteins. Requires at least a dipeptide for an efficient rate of reaction. N-terminal L-methionine is a prerequisite for activity but the enzyme has broad specificity at other positions. The protein is Peptide deformylase of Bradyrhizobium sp. (strain BTAi1 / ATCC BAA-1182).